Consider the following 217-residue polypeptide: Homologous-pairing protein 2 homolog (217 aa).

Residues 93 to 153 (IVALTAKVQS…LKNIKAATNH (61 aa)) are a coiled coil. The interval 118–182 (SSALTTPEMQ…WRKRKRMATE (65 aa)) is DNA-binding.

The protein belongs to the HOP2 family. Interacts with the DNA-binding domain of the nuclear receptors NR3C1/GR, ESR2/ER-beta, THRB and RXRA. Forms a stable heterodimer with MND1. Interacts with PSMC3/TBP1. PTM: Phosphorylated by PKA, PKC and MAPK. Highly expressed in testis and colon.

It localises to the nucleus. Functionally, plays an important role in meiotic recombination. Stimulates DMC1-mediated strand exchange required for pairing homologous chromosomes during meiosis. The complex PSMC3IP/MND1 binds DNA, stimulates the recombinase activity of DMC1 as well as DMC1 D-loop formation from double-strand DNA. This complex stabilizes presynaptic RAD51 and DMC1 filaments formed on single strand DNA to capture double-strand DNA. This complex stimulates both synaptic and presynaptic critical steps in RAD51 and DMC1-promoted homologous pairing. May inhibit HIV-1 viral protein TAT activity and modulate the activity of proteasomes through association with PSMC3. Acts as a tissue specific coactivator of hormone-dependent transcription mediated by nuclear receptors. In Homo sapiens (Human), this protein is Homologous-pairing protein 2 homolog (PSMC3IP).